A 419-amino-acid chain; its full sequence is Serine--tRNA ligase (419 aa).

Position 226–228 (226–228 (TSE)) interacts with L-serine. Residues 257–259 (RRE) and Val273 contribute to the ATP site. Glu280 contributes to the L-serine binding site. 344–347 (ELTS) serves as a coordination point for ATP. Thr379 lines the L-serine pocket.

This sequence belongs to the class-II aminoacyl-tRNA synthetase family. Type-1 seryl-tRNA synthetase subfamily. In terms of assembly, homodimer. The tRNA molecule binds across the dimer.

It localises to the cytoplasm. The enzyme catalyses tRNA(Ser) + L-serine + ATP = L-seryl-tRNA(Ser) + AMP + diphosphate + H(+). It catalyses the reaction tRNA(Sec) + L-serine + ATP = L-seryl-tRNA(Sec) + AMP + diphosphate + H(+). The protein operates within aminoacyl-tRNA biosynthesis; selenocysteinyl-tRNA(Sec) biosynthesis; L-seryl-tRNA(Sec) from L-serine and tRNA(Sec): step 1/1. Catalyzes the attachment of serine to tRNA(Ser). Is also able to aminoacylate tRNA(Sec) with serine, to form the misacylated tRNA L-seryl-tRNA(Sec), which will be further converted into selenocysteinyl-tRNA(Sec). In Mycolicibacterium vanbaalenii (strain DSM 7251 / JCM 13017 / BCRC 16820 / KCTC 9966 / NRRL B-24157 / PYR-1) (Mycobacterium vanbaalenii), this protein is Serine--tRNA ligase.